The following is a 453-amino-acid chain: MSDLSSNRLPNRASRVTNQALSAIERFLHIEALSGIVLLLAAASALIFANSQYAALYESFWHTPLGFNLGHFTLSWDLHFWVNDALMTIFFLVAGMEIRREIHEGALADFKQAILPIVAAIGGVCVPAIIYFIFNFNEGHIHGWAVPTATDIAFALGILALLGKKIPSNLHIILLSLAIIDDIIAVLIIAFFYSTNIDPSGLLIAGGGIALVLFFQWIGLASAWLYILPGAIIWWGLMVTGVHPSLAGVILGMMTPVFPTRTLVAPLTMLSNAMQILQEKNTKTDLHHISTALKKMRKGQRAMIAPVTRIQKALHPWVAYGIMPVFAFANAGVSFANFDLSSGKSFLIVFGVVIGLFVGKPLGIITASYLAVKSGLCRLPPQMTWAGILLIGFLAGIGFTMSIFVSMLAFKDIILLDAAKIGVLCGSGLSALIGLGYGFIYIKRNKDIPHSSE.

The next 11 helical transmembrane spans lie at 27–47, 78–98, 114–134, 143–163, 172–192, 201–221, 222–242, 316–336, 346–366, 385–405, and 421–441; these read FLHI…SALI, LHFW…GMEI, ILPI…YFIF, GWAV…ALLG, IILL…IAFF, GLLI…IGLA, SAWL…VTGV, PWVA…VSFA, FLIV…GIIT, WAGI…SIFV, and IGVL…GFIY.

The protein belongs to the NhaA Na(+)/H(+) (TC 2.A.33) antiporter family.

Its subcellular location is the cell inner membrane. The catalysed reaction is Na(+)(in) + 2 H(+)(out) = Na(+)(out) + 2 H(+)(in). Na(+)/H(+) antiporter that extrudes sodium in exchange for external protons. The sequence is that of Na(+)/H(+) antiporter NhaA from Bartonella tribocorum (strain CIP 105476 / IBS 506).